Consider the following 182-residue polypeptide: Vacuolar protein sorting-associated protein 29 (182 aa).

Belongs to the VPS29 family. As to quaternary structure, component of the commander complex consisting of the CCC subcomplex and the retriever subcomplex. Component of the heterotrimeric retriever complex formed by vps26c, vps29 and vps35l; within the complex interacts with vps35l. Component of the heterotrimeric retromer cargo-selective complex (CSC), also described as vacuolar protein sorting subcomplex (VPS), formed by vps26 (vps26a or vps26b), vps29 and vps35. The CSC has a highly elongated structure with vps26 and vps29 binding independently at opposite distal ends of vps35 as central platform.

The protein localises to the cytoplasm. The protein resides in the membrane. It is found in the endosome membrane. In terms of biological role, component of the commander complex that is essential for endosomal recycling of transmembrane cargos; the commander complex is composed of the CCC subcomplex and the retriever subcomplex. Component of the retriever complex, which is a heterotrimeric complex related to retromer cargo-selective complex (CSC) and essential for retromer-independent retrieval and recycling of numerous cargos. Component of the retromer cargo-selective complex (CSC). The CSC is believed to be the core functional component of retromer or respective retromer complex variants acting to prevent missorting of selected transmembrane cargo proteins into the lysosomal degradation pathway. In the endosomes, retriever complex drives the retrieval and recycling of NxxY-motif-containing cargo proteins by coupling to snx17, a cargo essential for the homeostatic maintenance of numerous cell surface proteins associated with processes that include cell migration, cell adhesion, nutrient supply and cell signaling. The recruitment of the retriever complex to the endosomal membrane involves CCC and WASH complexes. The chain is Vacuolar protein sorting-associated protein 29 (vps29) from Danio rerio (Zebrafish).